Consider the following 360-residue polypeptide: Cyclin-Y-like protein 2 (360 aa).

The Cyclin N-terminal domain maps to 204 to 286 (RLTAEFAIVS…FLKLINYNIG (83 aa)).

The protein belongs to the cyclin family. Cyclin Y subfamily.

This chain is Cyclin-Y-like protein 2 (CCNYL2), found in Macaca fascicularis (Crab-eating macaque).